Here is a 408-residue protein sequence, read N- to C-terminus: Peptidase T (408 aa).

His-78 serves as a coordination point for Zn(2+). The active site involves Asp-80. Asp-141 contributes to the Zn(2+) binding site. Catalysis depends on Glu-175, which acts as the Proton acceptor. Positions 176, 198, and 380 each coordinate Zn(2+).

It belongs to the peptidase M20B family. It depends on Zn(2+) as a cofactor.

It is found in the cytoplasm. The catalysed reaction is Release of the N-terminal residue from a tripeptide.. In terms of biological role, cleaves the N-terminal amino acid of tripeptides. This chain is Peptidase T, found in Clostridium acetobutylicum (strain ATCC 824 / DSM 792 / JCM 1419 / IAM 19013 / LMG 5710 / NBRC 13948 / NRRL B-527 / VKM B-1787 / 2291 / W).